Here is a 503-residue protein sequence, read N- to C-terminus: Cell wall integrity and stress response component 2 (503 aa).

An N-terminal signal peptide occupies residues 1-23 (MHLDLIHKSFILVWLIYIRAALA). The Extracellular portion of the chain corresponds to 24 to 325 (DQFTYKACYS…KGLSGGAIAG (302 aa)). A WSC domain is found at 25–118 (QFTYKACYSA…SSAMNVYINN (94 aa)). A disordered region spans residues 124-260 (DSTSSTATST…STPSSTSIGT (137 aa)). A helical transmembrane segment spans residues 326–346 (VVVGVVCGTVALLALALFFFV). At 347–503 (WKKRRQSSQH…AKDSNNSSLR (157 aa)) the chain is on the cytoplasmic side. A Phosphothreonine modification is found at threonine 402. Serine 455 and serine 458 each carry phosphoserine. The interval 470–503 (IVNPDNVSSNIGSNVSDGDDDYDDAKDSNNSSLR) is disordered.

N-glycosylated.

The protein localises to the cell membrane. In Saccharomyces cerevisiae (strain ATCC 204508 / S288c) (Baker's yeast), this protein is Cell wall integrity and stress response component 2 (WSC2).